A 156-amino-acid polypeptide reads, in one-letter code: 6,7-dimethyl-8-ribityllumazine synthase (156 aa).

5-amino-6-(D-ribitylamino)uracil contacts are provided by residues Phe22, 57–59 (AYE), and 81–83 (SVI). 86–87 (GT) contacts (2S)-2-hydroxy-3-oxobutyl phosphate. Catalysis depends on His89, which acts as the Proton donor. A 5-amino-6-(D-ribitylamino)uracil-binding site is contributed by Phe114. A (2S)-2-hydroxy-3-oxobutyl phosphate-binding site is contributed by Arg128.

This sequence belongs to the DMRL synthase family. Forms an icosahedral capsid composed of 60 subunits, arranged as a dodecamer of pentamers.

The catalysed reaction is (2S)-2-hydroxy-3-oxobutyl phosphate + 5-amino-6-(D-ribitylamino)uracil = 6,7-dimethyl-8-(1-D-ribityl)lumazine + phosphate + 2 H2O + H(+). The protein operates within cofactor biosynthesis; riboflavin biosynthesis; riboflavin from 2-hydroxy-3-oxobutyl phosphate and 5-amino-6-(D-ribitylamino)uracil: step 1/2. In terms of biological role, catalyzes the formation of 6,7-dimethyl-8-ribityllumazine by condensation of 5-amino-6-(D-ribitylamino)uracil with 3,4-dihydroxy-2-butanone 4-phosphate. This is the penultimate step in the biosynthesis of riboflavin. The polypeptide is 6,7-dimethyl-8-ribityllumazine synthase (Photobacterium profundum (strain SS9)).